Consider the following 358-residue polypeptide: Putative glycylpeptide N-tetradecanoyltransferase (358 aa).

The protein belongs to the NMT family.

It carries out the reaction N-terminal glycyl-[protein] + tetradecanoyl-CoA = N-tetradecanoylglycyl-[protein] + CoA + H(+). Functionally, adds a myristoyl group to the N-terminal glycine residue of certain proteins. The sequence is that of Putative glycylpeptide N-tetradecanoyltransferase from Acanthamoeba polyphaga (Amoeba).